Consider the following 397-residue polypeptide: Elongation factor Tu 1 (397 aa).

The tr-type G domain maps to 10-206 (KPHVNIGTIG…AVDENIPQPE (197 aa)). The tract at residues 19–26 (GHIDHGKT) is G1. 19–26 (GHIDHGKT) contributes to the GTP binding site. Thr26 contributes to the Mg(2+) binding site. A G2 region spans residues 62–66 (GITIS). The G3 stretch occupies residues 83 to 86 (DCPG). GTP-binding positions include 83 to 87 (DCPGH) and 138 to 141 (NKAD). Positions 138 to 141 (NKAD) are G4. Residues 176-178 (SAL) form a G5 region.

Belongs to the TRAFAC class translation factor GTPase superfamily. Classic translation factor GTPase family. EF-Tu/EF-1A subfamily. As to quaternary structure, monomer.

It localises to the cytoplasm. The enzyme catalyses GTP + H2O = GDP + phosphate + H(+). In terms of biological role, GTP hydrolase that promotes the GTP-dependent binding of aminoacyl-tRNA to the A-site of ribosomes during protein biosynthesis. The polypeptide is Elongation factor Tu 1 (Streptomyces avermitilis (strain ATCC 31267 / DSM 46492 / JCM 5070 / NBRC 14893 / NCIMB 12804 / NRRL 8165 / MA-4680)).